The following is a 520-amino-acid chain: Ribonuclease Y (520 aa).

The chain crosses the membrane as a helical span at residues 3–23 (IEIAIVLILAAAGLGYFVGNM). In terms of domain architecture, KH spans 210–273 (SVSVVALPSD…EVAKIALEKL (64 aa)). The region spanning 336–429 (VYQHSLEVAF…VQAADALSGA (94 aa)) is the HD domain.

The protein belongs to the RNase Y family.

The protein localises to the cell membrane. Functionally, endoribonuclease that initiates mRNA decay. The chain is Ribonuclease Y from Geobacter metallireducens (strain ATCC 53774 / DSM 7210 / GS-15).